Consider the following 462-residue polypeptide: Argininosuccinate lyase (462 aa).

This sequence belongs to the lyase 1 family. Argininosuccinate lyase subfamily.

The protein resides in the cytoplasm. The catalysed reaction is 2-(N(omega)-L-arginino)succinate = fumarate + L-arginine. The protein operates within amino-acid biosynthesis; L-arginine biosynthesis; L-arginine from L-ornithine and carbamoyl phosphate: step 3/3. This chain is Argininosuccinate lyase, found in Streptococcus agalactiae serotype III (strain NEM316).